The sequence spans 471 residues: UDP-N-acetylmuramoylalanine--D-glutamate ligase (471 aa).

120–126 (GSNGKTT) is an ATP binding site.

Belongs to the MurCDEF family.

It localises to the cytoplasm. It catalyses the reaction UDP-N-acetyl-alpha-D-muramoyl-L-alanine + D-glutamate + ATP = UDP-N-acetyl-alpha-D-muramoyl-L-alanyl-D-glutamate + ADP + phosphate + H(+). Its pathway is cell wall biogenesis; peptidoglycan biosynthesis. Its function is as follows. Cell wall formation. Catalyzes the addition of glutamate to the nucleotide precursor UDP-N-acetylmuramoyl-L-alanine (UMA). The polypeptide is UDP-N-acetylmuramoylalanine--D-glutamate ligase (Nitrosomonas europaea (strain ATCC 19718 / CIP 103999 / KCTC 2705 / NBRC 14298)).